Reading from the N-terminus, the 174-residue chain is N5-carboxyaminoimidazole ribonucleotide mutase (174 aa).

Residues serine 16, aspartate 19, and arginine 46 each contribute to the substrate site.

The protein belongs to the AIR carboxylase family. Class I subfamily.

The enzyme catalyses 5-carboxyamino-1-(5-phospho-D-ribosyl)imidazole + H(+) = 5-amino-1-(5-phospho-D-ribosyl)imidazole-4-carboxylate. The protein operates within purine metabolism; IMP biosynthesis via de novo pathway; 5-amino-1-(5-phospho-D-ribosyl)imidazole-4-carboxylate from 5-amino-1-(5-phospho-D-ribosyl)imidazole (N5-CAIR route): step 2/2. Its function is as follows. Catalyzes the conversion of N5-carboxyaminoimidazole ribonucleotide (N5-CAIR) to 4-carboxy-5-aminoimidazole ribonucleotide (CAIR). The sequence is that of N5-carboxyaminoimidazole ribonucleotide mutase from Mycobacterium tuberculosis (strain CDC 1551 / Oshkosh).